The sequence spans 442 residues: tRNA modification GTPase MnmE (442 aa).

(6S)-5-formyl-5,6,7,8-tetrahydrofolate is bound by residues R23, E82, and K121. A TrmE-type G domain is found at 215–364 (GTSLILAGKP…VKQALIQWMQ (150 aa)). A K(+)-binding site is contributed by N225. GTP contacts are provided by residues 225-230 (NVGKSS), 244-250 (THIPGTT), 269-272 (DTAG), and 325-328 (NKAD). S229 is a binding site for Mg(2+). Positions 244, 246, and 249 each coordinate K(+). T250 serves as a coordination point for Mg(2+). K442 contributes to the (6S)-5-formyl-5,6,7,8-tetrahydrofolate binding site.

It belongs to the TRAFAC class TrmE-Era-EngA-EngB-Septin-like GTPase superfamily. TrmE GTPase family. In terms of assembly, homodimer. Heterotetramer of two MnmE and two MnmG subunits. The cofactor is K(+).

It localises to the cytoplasm. In terms of biological role, exhibits a very high intrinsic GTPase hydrolysis rate. Involved in the addition of a carboxymethylaminomethyl (cmnm) group at the wobble position (U34) of certain tRNAs, forming tRNA-cmnm(5)s(2)U34. This Chlamydia pneumoniae (Chlamydophila pneumoniae) protein is tRNA modification GTPase MnmE.